The sequence spans 132 residues: Histone H2A.2 (132 aa).

Ser-2 is modified (N-acetylserine). 2 positions are modified to N6-acetyllysine: Lys-5 and Lys-8. An N6-succinyllysine mark is found at Lys-14 and Lys-22. Position 106 is an N5-methylglutamine (Gln-106). N6-malonyllysine is present on Lys-120. Residue Lys-127 forms a Glycyl lysine isopeptide (Lys-Gly) (interchain with G-Cter in SUMO) linkage. Ser-129 is subject to Phosphoserine. Residues 129-130 (SQ) carry the [ST]-Q motif motif.

Belongs to the histone H2A family. In terms of assembly, the nucleosome is a histone octamer containing two molecules each of H2A, H2B, H3 and H4 assembled in one H3-H4 heterotetramer and two H2A-H2B heterodimers. The octamer wraps approximately 147 bp of DNA. Interacts with NAP1. Post-translationally, phosphorylated to form H2AS128ph (gamma-H2A) in response to DNA double-strand breaks (DSBs) generated by exogenous genotoxic agents and by stalled replication forks. Phosphorylation is dependent on the DNA damage checkpoint kinases MEC1/ATR and TEL1/ATM, spreads on either side of a detected DSB site and may mark the surrounding chromatin for recruitment of proteins required for DNA damage signaling and repair. Gamma-H2A interacts with ARP4, a shared component of the NuA4 histone acetyltransferase complex and the INO80 and SWR1 chromatin remodeling complexes, and serves to recruit first NuA4, mediating histone H4 acetylation, and subsequently the INO80/SWR1 complexes, facilitating DNA resection, to DSB sites. Gamma-H2A is required for sequestering cohesin around the break site, which is important for efficient post-replicative double-strand break repair by homologous recombination, holding the damaged chromatid close to its undamaged sister template. Gamma-H2A is removed from the DNA prior to the strand invasion-primer extension step of the repair process and subsequently dephosphorylated by PPH3, a component of the histone H2A phosphatase complex (HTP-C). Dephosphorylation is necessary for efficient recovery from the DNA damage checkpoint. In terms of processing, N-acetylated by NAT4. Acetylated by ESA1, a component of the NuA4 histone acetyltransferase (HAT) complex, to form H2AK4ac and H2AK7ac. Post-translationally, glutamine methylation at Gln-106 (H2AQ105me) by NOP1 is specifically dedicated to polymerase I. It is present at 35S ribosomal DNA locus and impairs binding of the FACT complex. In terms of processing, sumoylated to from H2AK126su. May lead to transcriptional repression.

The protein resides in the nucleus. Its subcellular location is the chromosome. Its function is as follows. Core component of nucleosome which plays a central role in DNA double strand break (DSB) repair. Nucleosomes wrap and compact DNA into chromatin, limiting DNA accessibility to the cellular machineries which require DNA as a template. Histones thereby play a central role in transcription regulation, DNA repair, DNA replication and chromosomal stability. DNA accessibility is regulated via a complex set of post-translational modifications of histones, also called histone code, and nucleosome remodeling. The polypeptide is Histone H2A.2 (HTA2) (Saccharomyces cerevisiae (strain ATCC 204508 / S288c) (Baker's yeast)).